We begin with the raw amino-acid sequence, 304 residues long: Cell surface-binding protein OPG105 (304 aa).

The region spanning 1 to 235 (MPQQLSPINI…NDDTQVYYSG (235 aa)) is the Alpha-carbonic anhydrase domain. The Virion surface segment spans residues 1 to 275 (MPQQLSPINI…YQKYIEGNKT (275 aa)). A helical membrane pass occupies residues 276 to 294 (FAIIAIVFVFILTAILFLM). Topologically, residues 295–304 (SQRYSREKQN) are intravirion.

This sequence belongs to the alpha-carbonic anhydrase family. In terms of assembly, homodimer; disulfide-linked. Apparently non-glycosylated.

The protein resides in the virion membrane. Functionally, binds to chondroitin sulfate on the cell surface to provide virion attachment to target cell. In Monkeypox virus (strain Zaire-96-I-16) (MPX), this protein is Cell surface-binding protein OPG105 (OPG105).